The following is a 239-amino-acid chain: Geranylgeranylglyceryl phosphate synthase (239 aa).

The Mg(2+) site is built by aspartate 18 and serine 45. Sn-glycerol 1-phosphate-binding positions include tyrosine 166–glycine 172, glycine 197–glycine 198, and glycine 219–threonine 220.

This sequence belongs to the GGGP/HepGP synthase family. Group II subfamily. The cofactor is Mg(2+).

Its subcellular location is the cytoplasm. The catalysed reaction is sn-glycerol 1-phosphate + (2E,6E,10E)-geranylgeranyl diphosphate = sn-3-O-(geranylgeranyl)glycerol 1-phosphate + diphosphate. It functions in the pathway membrane lipid metabolism; glycerophospholipid metabolism. Functionally, prenyltransferase that catalyzes the transfer of the geranylgeranyl moiety of geranylgeranyl diphosphate (GGPP) to the C3 hydroxyl of sn-glycerol-1-phosphate (G1P). This reaction is the first ether-bond-formation step in the biosynthesis of archaeal membrane lipids. This Pyrobaculum islandicum (strain DSM 4184 / JCM 9189 / GEO3) protein is Geranylgeranylglyceryl phosphate synthase.